The primary structure comprises 249 residues: 5'-nucleotidase SurE (249 aa).

The a divalent metal cation site is built by Asp-8, Asp-9, Ser-39, and Asn-91.

It belongs to the SurE nucleotidase family. It depends on a divalent metal cation as a cofactor.

It localises to the cytoplasm. It carries out the reaction a ribonucleoside 5'-phosphate + H2O = a ribonucleoside + phosphate. Its function is as follows. Nucleotidase that shows phosphatase activity on nucleoside 5'-monophosphates. This Pseudomonas fluorescens (strain Pf0-1) protein is 5'-nucleotidase SurE.